Here is a 736-residue protein sequence, read N- to C-terminus: MAYIAVPAVVDSRSSEAIGLLESFGVDAGADANDVSYQDHDYVLDQLQYMLDGYEAGDVIDALVHKNWLHHSVYCLLPPKSQLLEYWKSNPSAIPDNVDRRLRKRLMLKKDLRKDDEYNQLARAFKISDVYAPLISSTTSPMTMIQNLNRGEIVYTTTDRVIGARILLYAPRKYYASTLSFTMTKCIIPFGKEVGRVPHSRFNVGTFPSIATPKCFVMSGVDIESIPNEFIKLFYQRVKSVHANILNDISPQIVSDMINRKRLRVHTPSDRRAAQLMHLPYHVKRGASHVDVYKVDVVDMLFEVVDVADGLRNVSRKLTMHTVPVCILEMLGIEIADYCIRQEDGMLTDWFLLLTMLSDGLTDRRTHCQYLMNPSSVPPDVILNISITGFINRHTIDVMPDIYDFVKPIGAVLPKGSFKSTIMRVLDSISILGIQIMPRAHVVDSDEVGEQMEPTFEQAVMEIYKGIAGVDSLDDLIKWVLNSDLIPHDDRLGQLFQAFLPLAKDLLAPMARKFYDNSMSEGRLLTFAHADSELLNANYFGHLLRLKIPYITEVNLMIRKNREGGELFQLVLSYLYKMYATSAQPKWFGSLLRLLICPWLHMEKLIGEADPASTSAEIGWHIPREQLMQDGWCGCEDGFIPYVSIRAPRLVIEELMEKNWGQYHAQVIVTDQLVVGEPRRVSAKAVIKGNHLPVKLVSRFACFTLTAKYEMRLSCGHSTGRGAAYSARLAFRSDLA.

Belongs to the orthoreovirus mu-2 protein family. As to quaternary structure, interacts with protein mu-NS; in viral inclusions. Interacts with polymerase lambda-3; this interaction stimulates the ATPase activity of mu-2. A divalent metal cation serves as cofactor.

It localises to the virion. The protein localises to the host cytoplasm. It is found in the host cytoskeleton. Minor inner capsid (core) component. Displays NTPase and RNA 5'-triphosphatase (RTPase) activities. ATP is the preferred substrate for hydrolysis. May function as a cofactor of polymerase lambda-3. Associates with microtubules and plays a role in the formation, structural organization and morphology of viral inclusions, where the assembly of cores and the replication of viral RNA occur. Together with mu-NS, recruits the other core proteins to these inclusions. The sequence is that of Microtubule-associated protein mu-2 (M1) from Mammalia (T3D).